Here is a 358-residue protein sequence, read N- to C-terminus: Phosphoserine aminotransferase (358 aa).

Arginine 41 lines the L-glutamate pocket. Pyridoxal 5'-phosphate contacts are provided by residues 75-76, tryptophan 100, threonine 148, aspartate 167, and glutamine 190; that span reads AS. Lysine 191 bears the N6-(pyridoxal phosphate)lysine mark. 233–234 contacts pyridoxal 5'-phosphate; it reads NT.

The protein belongs to the class-V pyridoxal-phosphate-dependent aminotransferase family. SerC subfamily. Homodimer. It depends on pyridoxal 5'-phosphate as a cofactor.

The protein localises to the cytoplasm. The catalysed reaction is O-phospho-L-serine + 2-oxoglutarate = 3-phosphooxypyruvate + L-glutamate. It catalyses the reaction 4-(phosphooxy)-L-threonine + 2-oxoglutarate = (R)-3-hydroxy-2-oxo-4-phosphooxybutanoate + L-glutamate. It functions in the pathway amino-acid biosynthesis; L-serine biosynthesis; L-serine from 3-phospho-D-glycerate: step 2/3. It participates in cofactor biosynthesis; pyridoxine 5'-phosphate biosynthesis; pyridoxine 5'-phosphate from D-erythrose 4-phosphate: step 3/5. Catalyzes the reversible conversion of 3-phosphohydroxypyruvate to phosphoserine and of 3-hydroxy-2-oxo-4-phosphonooxybutanoate to phosphohydroxythreonine. The chain is Phosphoserine aminotransferase from Campylobacter jejuni (strain RM1221).